Reading from the N-terminus, the 850-residue chain is MPSINENEDIINKLKMSTITDDIIIQPSIDDLPYEEDVSKNPYSVNCWLRYLEFKQGSPQKQRNYIYERAIRELPRSYKIWHQYLLERTLAIRGKCILENSFEAVNTLFERSLVFLDKMPRIWIEYCEFLMIQEKITLTRKTFDRALIALPVTQHYRIWNEYTKFILKRSIPSLTCIRVYKRYLKIQPEKVEEYIEYLIKIKEWQEVVNQLIKLLDNVKFKSIKGKSRHDHWLQLCEILSSYPKQITGVDVDSVIRSGIGKFSDQIGKLWCYLSDYYIQLAQFEKARDIFEEALTSVGTARDFSFIWESYTQFEDSLIAAKQEILEEDPSEDNLLEFDIIIERYENLIQRQPLLLNSVMLKQNPNNVQEWLKRVNLYSNPTPNVKMIIQTFTDSIKSIDPQLAKGKLSTIYSTFAHFYEQNNKLSQARLIFENSLTVNFKTIDDLSTLYCDYAEMELKHRNYEKAIEILKRGTVSPKKQNTIIEENEPVQKRLFKSIKIWTFYVDLEESFGTFHNTKSIYEKMIQLKVVTPQIILNFAKYLEENKYFEDMFKAYEHGVQLFLFPHVQDIWITYLTKFIQRYAGMKLERTRDLFEQVLSKVPPKESIIFYLMYANFEEQYGLARHSMAVYDRAAKSVDKEDRFKMYLLYIHRASEFFGVNQTREIFSKAIEQLPDQYVRDMCLKFADMEKKYGEIDRARSIYIHGSQFSDPRTSMFYWNTWSDFEKLHGNEDTFKEMLRIRRSVQASYITQNPTLALLNKLNNKDDKDDKNQQQKQQQQQQEKQQQQQQQQQQASTLTKSKPVTVSLPETIQYNKKIENDDEINLDDDEEEEEEEDQLAIKAFPKTLLKII.

11 HAT repeats span residues 25 to 57 (IQPS…FKQG), 58 to 90 (SPQK…ERTL), 100 to 132 (NSFE…FLMI), 134 to 168 (EKIT…FILK), 171 to 203 (IPSL…KIKE), 281 to 316 (AQFE…FEDS), 477 to 509 (KKQN…LEES), 511 to 543 (GTFH…YLEE), 545 to 579 (KYFE…KFIQ), 584 to 618 (MKLE…FEEQ), and 692 to 726 (GEID…FEKL). Basic and acidic residues predominate over residues 761 to 771 (NNKDDKDDKNQ). A disordered region spans residues 761-837 (NNKDDKDDKN…EEEEEEEDQL (77 aa)). A compositionally biased stretch (low complexity) spans 772 to 792 (QQKQQQQQQEKQQQQQQQQQQ). Polar residues predominate over residues 793 to 812 (ASTLTKSKPVTVSLPETIQY). A compositionally biased stretch (acidic residues) spans 818–836 (NDDEINLDDDEEEEEEEDQ).

Belongs to the crooked-neck family. In terms of assembly, identified in the spliceosome C complex.

Its subcellular location is the nucleus. Involved in pre-mRNA splicing as component of the spliceosome. Involved in transcription-coupled repair (TCR), transcription and pre-mRNA splicing. The protein is Pre-mRNA-splicing factor SYF1 (xab2) of Dictyostelium discoideum (Social amoeba).